The following is an 815-amino-acid chain: Probable oligoxyloglucan-reducing end-specific xyloglucanase (815 aa).

A signal peptide spans 1–19; the sequence is MKFWLQQLGLAVLCASSAA. Aspartate 58 (nucleophile) is an active-site residue. Residue asparagine 113 is glycosylated (N-linked (GlcNAc...) asparagine). Residues 118 to 128 form a BNR 1 repeat; the sequence is FVSNDRGATFT. N-linked (GlcNAc...) asparagine glycosylation occurs at asparagine 180. A BNR 2 repeat occupies 218–228; sequence YYTTDGGKNWE. Residues asparagine 246, asparagine 290, and asparagine 304 are each glycosylated (N-linked (GlcNAc...) asparagine). One copy of the BNR 3 repeat lies at 351–361; sequence YLSRDGGKTWK. The N-linked (GlcNAc...) asparagine glycan is linked to asparagine 387. The active-site Proton donor is aspartate 489. One copy of the BNR 4 repeat lies at 545 to 555; sequence YSTDGGSEWTK. Asparagine 564 and asparagine 603 each carry an N-linked (GlcNAc...) asparagine glycan. Residues 649 to 658 form a BNR 5 repeat; it reads YVSTDGGLSY. Asparagine 662 carries N-linked (GlcNAc...) asparagine glycosylation. BNR repeat units follow at residues 696–706 and 749–759; these read YHTTDFGKRWK and YRSDDNGSTWD. Asparagine 754 is a glycosylation site (N-linked (GlcNAc...) asparagine).

It belongs to the glycosyl hydrolase 74 family.

It localises to the secreted. The catalysed reaction is Hydrolysis of cellobiose from the reducing end of xyloglucans consisting of a beta-(1-&gt;4)-linked glucan carrying alpha-D-xylosyl groups on O-6 of the glucose residues. To be a substrate, the first residue must be unsubstituted, the second residue may bear a xylosyl group, whether further glycosylated or not, and the third residue, which becomes the new terminus by the action of the enzyme, is preferably xylosylated, but this xylose residue must not be further substituted.. Oligoxyloglucan-reducing end-specific xyloglucanase involved in degradation of xyloglucans. Releases the first two glycosyl segments from oligoxyloglucans. Active against cotton xyloglucan, tamarind xyloglucan and tamarind xyloglucan oligomers. This is Probable oligoxyloglucan-reducing end-specific xyloglucanase (xgcA) from Neosartorya fischeri (strain ATCC 1020 / DSM 3700 / CBS 544.65 / FGSC A1164 / JCM 1740 / NRRL 181 / WB 181) (Aspergillus fischerianus).